The following is an 885-amino-acid chain: 3-hydroxy-3-methylglutaryl-coenzyme A reductase (885 aa).

Residues 1 to 9 lie on the Cytoplasmic side of the membrane; that stretch reads MLSRLFRMH. A helical membrane pass occupies residues 10 to 39; that stretch reads GLFVASHPWEVIVGTVTLTICMMSMNMFTG. The Lumenal portion of the chain corresponds to 40-56; sequence NDKICGWNYECPKFEED. A helical membrane pass occupies residues 57 to 78; the sequence is VLSSDIIILTITRCIAILYIYF. The 158-residue stretch at 61 to 218 folds into the SSD domain; it reads DIIILTITRC…MTFFPACVSL (158 aa). The short motif at 75 to 78 is the INSIG-binding motif element; the sequence is YIYF. Topologically, residues 79–89 are cytoplasmic; sequence QFQNLRQLGSK. A Glycyl lysine isopeptide (Lys-Gly) (interchain with G-Cter in ubiquitin) cross-link involves residue Lys-89. The chain crosses the membrane as a helical span at residues 90–114; the sequence is YILGIAGLFTIFSSFVFSTVVIHFL. Residues 115–123 are Lumenal-facing; that stretch reads DKELTGLNE. The helical transmembrane segment at 124 to 149 threads the bilayer; it reads ALPFFLLLIDLSRASALAKFALSSNS. At 150 to 159 the chain is on the cytoplasmic side; that stretch reads QDEVRENIAR. Residues 160–187 traverse the membrane as a helical segment; that stretch reads GMAILGPTFTLDALVECLVIGVGTMSGV. Residues 188–191 are Lumenal-facing; the sequence is RQLE. Residues 192–220 traverse the membrane as a helical segment; it reads IMCCFGCMSVLATYFVFMTFFPACVSLVL. Residues 221–248 lie on the Cytoplasmic side of the membrane; it reads ELSRESREGRPIWQLSHFARVLEGEENK. Residue Lys-248 forms a Glycyl lysine isopeptide (Lys-Gly) (interchain with G-Cter in ubiquitin) linkage. The helical transmembrane segment at 249-275 threads the bilayer; sequence PNPVTQRVKIIMSLGLVLVHAHSRWIA. Over 276 to 314 the chain is Lumenal; it reads DPSPQNSTADNSKVSLGLDENVSKRIEPSVSLWQFYLSK. N-linked (GlcNAc...) asparagine glycans are attached at residues Asn-281 and Asn-296. The chain crosses the membrane as a helical span at residues 315 to 339; that stretch reads MISMDIEQVITLTLALLLAVKYIFF. Residues 340–885 are Cytoplasmic-facing; that stretch reads EQAETESTLS…LQGTCTKKAA (546 aa). Active-site charge relay system residues include Glu-558, Lys-688, and Asp-764. His-863 functions as the Proton donor in the catalytic mechanism. Phosphoserine; by AMPK is present on Ser-869.

This sequence belongs to the HMG-CoA reductase family. As to quaternary structure, homotetramer. Homodimer. Interacts (via its SSD) with INSIG1; the interaction, accelerated by sterols, leads to the recruitment of HMGCR to AMFR/gp78 for its ubiquitination by the sterol-mediated ERAD pathway. Interacts with UBIAD1. In terms of processing, undergoes sterol-mediated ubiquitination and ER-associated degradation (ERAD). Accumulation of sterols in the endoplasmic reticulum (ER) membrane, triggers binding of the reductase to the ER membrane protein INSIG1 or INSIG2. The INSIG1 binding leads to the recruitment of the ubiquitin ligase, AMFR/gp78, RNF139 or RNF145, initiating ubiquitination of the reductase. The ubiquitinated reductase is then extracted from the ER membrane and delivered to cytosolic 26S proteosomes by a mechanism probably mediated by the ATPase Valosin-containing protein VCP/p97. The INSIG2-binding leads to the recruitment of the ubiquitin ligase RNF139, initiating ubiquitination of the reductase. Lys-248 is the main site of ubiquitination. Ubiquitination is enhanced by the presence of a geranylgeranylated protein. N-glycosylated. Deglycosylated by NGLY1 on release from the endoplasmic reticulum (ER) in a sterol-mediated manner. Post-translationally, phosphorylated. Phosphorylation at Ser-869 reduces the catalytic activity. In terms of tissue distribution, high expression found in liver, heart, kidney, bladder and subcutaneous fat. Lower levels in lung, uterus and large intestine. Lowest levels in cerebrum, spleen, spinal cord, stomach, ovary, longissimus muscle, and small intestine.

Its subcellular location is the endoplasmic reticulum membrane. It localises to the peroxisome membrane. The catalysed reaction is (R)-mevalonate + 2 NADP(+) + CoA = (3S)-3-hydroxy-3-methylglutaryl-CoA + 2 NADPH + 2 H(+). It participates in metabolic intermediate biosynthesis; (R)-mevalonate biosynthesis; (R)-mevalonate from acetyl-CoA: step 3/3. With respect to regulation, regulated by a negative feedback mechanism through sterols and non-sterol metabolites derived from mevalonate. Phosphorylation at Ser-869 down-regulates the catalytic activity. Functionally, catalyzes the conversion of (3S)-hydroxy-3-methylglutaryl-CoA (HMG-CoA) to mevalonic acid, the rate-limiting step in the synthesis of cholesterol and other isoprenoids, thus plays a critical role in cellular cholesterol homeostasis. This chain is 3-hydroxy-3-methylglutaryl-coenzyme A reductase (HMGCR), found in Sus scrofa (Pig).